A 449-amino-acid polypeptide reads, in one-letter code: Guanine/hypoxanthine permease GhxP (449 aa).

Residues 1-25 lie on the Cytoplasmic side of the membrane; it reads MSTPSARTGGSLDAWFKISQRGSTV. A helical membrane pass occupies residues 26 to 49; sequence RQEVVAGLTTFLAMVYSVIVVPGM. The Periplasmic portion of the chain corresponds to 50–59; that stretch reads LGKAGFPPAA. Residues 60–78 traverse the membrane as a helical segment; it reads VFVATCLVAGLGSIVMGLW. At 79–80 the chain is on the cytoplasmic side; that stretch reads AN. A discontinuously helical membrane pass occupies residues 81–97; it reads LPLAIGCAISLTAFTAF. Topologically, residues 98 to 109 are periplasmic; that stretch reads SLVLGQHISVPV. A helical membrane pass occupies residues 110–129; the sequence is ALGAVFLMGVLFTVISATGI. The Cytoplasmic portion of the chain corresponds to 130–141; that stretch reads RSWILRNLPHGV. A helical membrane pass occupies residues 142–162; it reads AHGTGIGIGLFLLLIAANGVG. The Periplasmic segment spans residues 163–180; that stretch reads LVIKNPLDGLPVALGDFA. A helical membrane pass occupies residues 181 to 198; that stretch reads TFPVIMSLVGLAVIIGLE. Over 199–202 the chain is Cytoplasmic; it reads KLKV. Residues 203–222 form a helical membrane-spanning segment; sequence PGGILLTIIGISIVGLIFDP. Over 223–254 the chain is Periplasmic; that stretch reads NVHFSGVFAMPSLSDENGNSLIGSLDIMGALN. Residues 255 to 283 form a helical membrane-spanning segment; that stretch reads PVVLPSVLALVMTAVFDATGTIRAVAGQA. The Cytoplasmic segment spans residues 284–296; sequence NLLDKDGQIIDGG. The chain crosses the membrane as a helical span at residues 297–312; the sequence is KALTTDSMSSVFSGLV. Over 313 to 314 the chain is Periplasmic; sequence GA. A discontinuously helical membrane pass occupies residues 315 to 330; the sequence is APAAVYIESAAGTAAG. Over 331 to 334 the chain is Cytoplasmic; the sequence is GKTG. A helical membrane pass occupies residues 335–349; that stretch reads LTAITVGVLFLLILF. Topologically, residues 350–360 are periplasmic; sequence LSPLSYLVPGY. The helical transmembrane segment at 361–380 threads the bilayer; it reads ATAPALMYVGLLMLSNVAKI. At 381-385 the chain is on the cytoplasmic side; that stretch reads DFADF. The discontinuously helical intramembrane region spans 386–421; the sequence is VDAMAGLVTAVFIVLTCNIVTGIMIGFATLVIGRLV. Residues 422-449 lie on the Cytoplasmic side of the membrane; it reads SGEWRKLNIGTVVIAVALVTFYAGGWAI.

This sequence belongs to the nucleobase:cation symporter-2 (NCS2) (TC 2.A.40) family. Azg-like subfamily.

The protein resides in the cell inner membrane. High-affinity transporter for guanine and hypoxanthine. The chain is Guanine/hypoxanthine permease GhxP (ghxP) from Escherichia coli O157:H7.